Consider the following 393-residue polypeptide: MRAANATTGAVRRLFLIATEESGDRLGAALMQALKTRLGDGVVFEGVGGRAMAEQGLVSLFPIEELSIMGISAVVRRLPSILRRIRSTADAVLGAKPDMLIIIDSPDFTHRVARRVRVRDPSIAIVNYVSPTVWAWRPGRARAMRRYVDHVLALLPFEPEEYRRLRGPPCTYVGHPLTEQIAHLRPSPAEQARRDAEPPVLVVLPGSRRSEIHHLMAVFGETLGRLQAEQGDLELILPTVPHLRDAVEAGVRDWPVQPRIVVGDADKKAAFRIARAAFAKSGTVTLELALAHVPMVAVYKAGAMEAWIGKRVIRSASVILANLVVGENVIPEFIQEDCVPDRLVPALREVLADTPMRARQLEGFGRIDDIMSTGAQTPSGRAADIVLNVLRKH.

Belongs to the LpxB family.

It carries out the reaction a lipid X + a UDP-2-N,3-O-bis[(3R)-3-hydroxyacyl]-alpha-D-glucosamine = a lipid A disaccharide + UDP + H(+). The protein operates within bacterial outer membrane biogenesis; LPS lipid A biosynthesis. Condensation of UDP-2,3-diacylglucosamine and 2,3-diacylglucosamine-1-phosphate to form lipid A disaccharide, a precursor of lipid A, a phosphorylated glycolipid that anchors the lipopolysaccharide to the outer membrane of the cell. This Rhodopseudomonas palustris (strain HaA2) protein is Lipid-A-disaccharide synthase.